Here is a 1379-residue protein sequence, read N- to C-terminus: ATPase histone chaperone YTA7 (1379 aa).

Disordered stretches follow at residues 1 to 39 (MARN…TTTR) and 54 to 243 (DFLE…NSRN). An N-acetylalanine modification is found at A2. Phosphoserine occurs at positions 11 and 17. Over residues 61-78 (VMDKDETPVDVTSDEHHN) the composition is skewed to basic and acidic residues. Position 94 is a phosphoserine (S94). Over residues 97 to 110 (ENARTNEELTNERN) the composition is skewed to basic and acidic residues. 2 stretches are compositionally biased toward acidic residues: residues 119–152 (PEED…DEDS) and 170–184 (DPDD…DEEG). A compositionally biased stretch (basic residues) spans 192 to 207 (SSKRLKRANSRRTRSS). T212 carries the phosphothreonine modification. Positions 218 to 228 (RALRSRTRHSR) are enriched in basic residues. Residue T229 is modified to Phosphothreonine. Phosphoserine occurs at positions 241, 259, and 285. Residues 302–330 (NPSPARRGRGGWNASQNSGPTRRLFPTGG) are disordered. Phosphoserine occurs at positions 367, 369, and 370. Residues 375–396 (LPLGVTPKTKKENTQKKKKKKP) are disordered. An AAA-ATPase; required for its chromatin boundary function region spans residues 450–578 (VLFHGPPGTG…PALRRPGRFD (129 aa)). 454–461 (GPPGTGKT) provides a ligand contact to ATP. At S735 the chain carries Phosphoserine. Residues 974 to 1101 (RLKNVLKIKL…ANAQMGIEEI (128 aa)) enclose the Bromo domain. The residue at position 1142 (S1142) is a Phosphoserine. Disordered stretches follow at residues 1233-1274 (TCTS…ANTN) and 1291-1316 (LHET…GKKS). Residues 1244–1254 (ERARKEPKENE) show a composition bias toward basic and acidic residues. A Phosphoserine modification is found at S1256. Residues 1256–1274 (SLQTQVTEENFSKIDANTN) show a composition bias toward polar residues. Positions 1293–1316 (ETVEKRERSPIPKEVVEPEQGKKS) are enriched in basic and acidic residues.

The protein belongs to the AAA ATPase family. In terms of assembly, interacts with CSE4/CENP-A. Interacts with SCM3. Interacts with SPT16. Interacts with POB3. Interacts with the casein kinase II complex subunits CKA1, CKA2, CKB1 and CKB2. Interacts with RNA polymerase II. Interacts (via Bromo domain) with histone H3. Interacts (via Bromo domain) with histone H4. Phosphorylated by CDK1 and casein kinase II during S-phase, which leads to its eviction from histone gene promoters and promotes histone gene transcription.

It is found in the chromosome. The protein localises to the centromere. It localises to the nucleus. Its function is as follows. Functions as an ATP-dependent nucleosome disassembly factor that helps evict canonical histone H3 from the 5'-end of genes upon their induction. Also contributes to kinetochore assembly by cooperating with SCM3 to load the histone H3 variant CSE4/CENP-A at centromeres. Provides a chromatin boundary function at the 5'-end of genes that restricts access by RTT106 and thus prevents ectopic spreading of repressive chromatin into coding regions. Also prevents heterochromatin spreading downstream of the silent mating-type locus HMR, this function is independent of the tRNA boundary element. Contributes to appropriate cell cycle regulation of histone gene expression by recruiting RNA polymerase II to histone genes, and subsequent CDK1- and casein kinase II-dependent eviction from chromatin is required to promote transcriptional elongation. In Saccharomyces cerevisiae (strain ATCC 204508 / S288c) (Baker's yeast), this protein is ATPase histone chaperone YTA7.